A 409-amino-acid polypeptide reads, in one-letter code: MSQQYFVIDNGSYNIKAGFSNQDAPIKHQNALSKARDGLIYVGNEYLVQTNNYSGMIFKRPYDHGHLISWETEKAVWDYTFNKASPNQELDASITHLTLTETPFQLPQLSMNTDQIVFEEYGFNEYYRCAPASLVPWSNLGSSESKNNDFTLVVDSGYSGTWIVPIIYQNVYWKGVKKLPIGGAALNGLLREIISFRHYDIADEPVLINTIKEKTCFMATDFEKSLANRKKYRCEFILPDFKTTTTGFVKTKDTPIDTTGDVQSLALIDERFTIPESFYHPEIIFDNTTSSTSTIQNASFKNITDLVVECIMSCPKVTQPLLSGNIITVGGNTNLPGFTDRLRHELVKELPIDWHVQVKETEHNPDEASWFGGAQLTNDEIINNISISKKDYFEHGSNWCQKQFGFKNL.

The protein belongs to the actin family. ARP6 subfamily. Component of the SWR1 chromatin remodeling complex.

It localises to the cytoplasm. The protein resides in the cytoskeleton. The protein localises to the nucleus. In terms of biological role, component of the SWR1 complex which mediates the ATP-dependent exchange of histone H2A for the H2A variant HZT1 leading to transcriptional regulation of selected genes by chromatin remodeling. Involved in chromosome stability. The sequence is that of Actin-like protein ARP6 (ARP6) from Debaryomyces hansenii (strain ATCC 36239 / CBS 767 / BCRC 21394 / JCM 1990 / NBRC 0083 / IGC 2968) (Yeast).